We begin with the raw amino-acid sequence, 76 residues long: MPLRLCQGRKDRASDPVRDDGSPPRLFVSQVCRRAPKDPQGFQGHRGGQNVGDCSPIFHQEKKQVMRRFYSLCEWK.

The tract at residues Met-1–Pro-24 is disordered. Residues Gly-8–Ser-22 are compositionally biased toward basic and acidic residues.

This is an uncharacterized protein from Dryophytes versicolor (chameleon treefrog).